A 232-amino-acid polypeptide reads, in one-letter code: Ribose-5-phosphate isomerase A (232 aa).

Residues 28-31 (TGST), 83-86 (DGAD), and 96-99 (KGGG) each bind substrate. Glu105 serves as the catalytic Proton acceptor. Substrate is bound at residue Lys123.

The protein belongs to the ribose 5-phosphate isomerase family. As to quaternary structure, homodimer.

It catalyses the reaction aldehydo-D-ribose 5-phosphate = D-ribulose 5-phosphate. The protein operates within carbohydrate degradation; pentose phosphate pathway; D-ribose 5-phosphate from D-ribulose 5-phosphate (non-oxidative stage): step 1/1. Functionally, catalyzes the reversible conversion of ribose-5-phosphate to ribulose 5-phosphate. This is Ribose-5-phosphate isomerase A from Allorhizobium ampelinum (strain ATCC BAA-846 / DSM 112012 / S4) (Agrobacterium vitis (strain S4)).